Here is a 65-residue protein sequence, read N- to C-terminus: Large ribosomal subunit protein uL29 (65 aa).

It belongs to the universal ribosomal protein uL29 family.

This is Large ribosomal subunit protein uL29 from Mycoplasmopsis synoviae (strain 53) (Mycoplasma synoviae).